The sequence spans 184 residues: GTP-binding protein Rheb (184 aa).

K8 participates in a covalent cross-link: Glycyl lysine isopeptide (Lys-Gly) (interchain with G-Cter in ubiquitin). Positions 16, 17, 18, 19, 20, 21, 32, and 33 each coordinate GDP. GTP is bound by residues S16, V17, G18, K19, S20, S21, V32, D33, Y35, P37, T38, G63, N119, K120, and D122. S20 serves as a coordination point for Mg(2+). An Effector region motif is present at residues 35–43 (YDPTIENTF). Residue T38 participates in Mg(2+) binding. Residue N119 coordinates GDP. D122 serves as a coordination point for GDP. S130 carries the post-translational modification Phosphoserine; by MAPKAPK5. A150 contacts GDP. A150 provides a ligand contact to GTP. C181 carries the post-translational modification Cysteine methyl ester. C181 carries S-farnesyl cysteine lipidation. Residues 182 to 184 (SVM) constitute a propeptide, removed in mature form.

It belongs to the small GTPase superfamily. Rheb family. As to quaternary structure, associates with the mTORC1 complex (MTOR, MLST8 and RPTOR) in a guanyl nucleotide-independent manner. Interacts with TSC2. Interacts with MCRS1; the interaction maintains RHEB at the lysosome in its active GTP-bound form and prevents its interaction with the mTORC1 complex inhibitor TSC2, ensuring activation of the mTORC1 complex by RHEB. Interacts (when prenylated) with PDE6D; this promotes release from membranes. In terms of processing, farnesylation is important for efficiently activating mTORC1-mediated signaling. Polyubiquitinated in response to amino acid, promoting its interaction with MTOR and mTORC1 activation. Deubiquitination by ATXN3 promotes recruitment of the TSC-TBC complex and RHEB inactivation by TSC2. Monoubiquitinated at Lys-8 by RNF152, promoting its association with the TSC-TBC complex. Deubiquitinated at Lys-8 by USP4, promoting mTORC1 activation. Post-translationally, phosphorylation by MAPKAPK5 impairs GTP-binding and inactivation.

The protein resides in the endomembrane system. It is found in the lysosome membrane. It localises to the golgi apparatus membrane. The protein localises to the endoplasmic reticulum membrane. Its subcellular location is the cytoplasm. The protein resides in the cytosol. The catalysed reaction is GTP + H2O = GDP + phosphate + H(+). Alternates between an inactive form bound to GDP and an active form bound to GTP. Inactivated by the TSC-TBC complex via the GTPase activating protein (GAP) domain of TSC2. Autoinhibited by Tyr-35, which constrains the active site conformation, restricting the access of the catalytic Asp-65 to the nucleotide-binding pocket. Small GTPase that acts as an allosteric activator of the canonical mTORC1 complex, an evolutionarily conserved central nutrient sensor that stimulates anabolic reactions and macromolecule biosynthesis to promote cellular biomass generation and growth. In response to nutrients, growth factors or amino acids, specifically activates the protein kinase activity of MTOR, the catalytic component of the mTORC1 complex: acts by causing a conformational change that allows the alignment of residues in the active site of MTOR, thereby enhancing the phosphorylation of ribosomal protein S6 kinase (RPS6KB1 and RPS6KB2) and EIF4EBP1 (4E-BP1). RHEB is also required for localization of the TSC-TBC complex to lysosomal membranes. In response to starvation, RHEB is inactivated by the TSC-TBC complex, preventing activation of mTORC1. Has low intrinsic GTPase activity. This Mus musculus (Mouse) protein is GTP-binding protein Rheb.